The following is a 95-amino-acid chain: MLYTLSRSPYACDLAALLRIAQHGDDLLLLSDGVIAGLTGSPAACALGASPLTLHALENDIVARGLSAHLSPNIAIISYTDFVRLTEKQPQQMAW.

The protein belongs to the DsrH/TusB family. As to quaternary structure, heterohexamer, formed by a dimer of trimers. The hexameric TusBCD complex contains 2 copies each of TusB, TusC and TusD. The TusBCD complex interacts with TusE.

Its subcellular location is the cytoplasm. Functionally, part of a sulfur-relay system required for 2-thiolation of 5-methylaminomethyl-2-thiouridine (mnm(5)s(2)U) at tRNA wobble positions. The polypeptide is Protein TusB (Sodalis glossinidius (strain morsitans)).